The following is a 196-amino-acid chain: Pyridoxal 5'-phosphate synthase subunit PdxT (196 aa).

Residue 47–49 (GES) coordinates L-glutamine. Cys79 functions as the Nucleophile in the catalytic mechanism. Residues Arg106 and 134–135 (IR) each bind L-glutamine. Residues His170 and Glu172 each act as charge relay system in the active site.

It belongs to the glutaminase PdxT/SNO family. In the presence of PdxS, forms a dodecamer of heterodimers. Only shows activity in the heterodimer.

It carries out the reaction aldehydo-D-ribose 5-phosphate + D-glyceraldehyde 3-phosphate + L-glutamine = pyridoxal 5'-phosphate + L-glutamate + phosphate + 3 H2O + H(+). The enzyme catalyses L-glutamine + H2O = L-glutamate + NH4(+). Its pathway is cofactor biosynthesis; pyridoxal 5'-phosphate biosynthesis. Catalyzes the hydrolysis of glutamine to glutamate and ammonia as part of the biosynthesis of pyridoxal 5'-phosphate. The resulting ammonia molecule is channeled to the active site of PdxS. In Bacillus cereus (strain Q1), this protein is Pyridoxal 5'-phosphate synthase subunit PdxT.